The chain runs to 193 residues: Small ribosomal subunit protein uS7 (193 aa).

The protein belongs to the universal ribosomal protein uS7 family. Part of the 30S ribosomal subunit.

Its function is as follows. One of the primary rRNA binding proteins, it binds directly to 16S rRNA where it nucleates assembly of the head domain of the 30S subunit. Is located at the subunit interface close to the decoding center. This is Small ribosomal subunit protein uS7 from Saccharolobus solfataricus (strain ATCC 35092 / DSM 1617 / JCM 11322 / P2) (Sulfolobus solfataricus).